Consider the following 662-residue polypeptide: Polyunsaturated fatty acid (12S)/(13S)-lipoxygenase, epidermal-type (662 aa).

The PLAT domain occupies Gly2–Leu114. One can recognise a Lipoxygenase domain in the interval Leu114–Ile662. Residues His360, His365, His540, His544, and Ile662 each coordinate Fe cation.

It belongs to the lipoxygenase family. The cofactor is Fe cation.

The protein resides in the cytoplasm. It catalyses the reaction (5Z,8Z,11Z,14Z)-eicosatetraenoate + O2 = (12S)-hydroperoxy-(5Z,8Z,10E,14Z)-eicosatetraenoate. The catalysed reaction is 1-O-methyl-(9Z,12Z)-octadecadienoate + O2 = 1-O-methyl-(13S)-hydroperoxy-(9Z,11E)-octadecadienoate. It carries out the reaction (8Z,11Z,14Z)-eicosatrienoate + O2 = (12S)-hydroperoxy-(8Z,10E,14Z)-eicosatrienoate. The enzyme catalyses (5Z,8Z,11Z)-eicosatrienoate + O2 = (12S)-hydroperoxy-(5Z,8Z,10E)-eicosatrienoate. It catalyses the reaction 1-O-methyl-(5Z,8Z,11Z,14Z)-eicosatetraenoate + O2 = 1-O-methyl-(12S)-hydroperoxy-(5Z,8Z,10E,14Z)-eicosatetraenoate. The catalysed reaction is (9Z,12Z)-octadecadienoate + O2 = (13S)-hydroperoxy-(9Z,11E)-octadecadienoate. It carries out the reaction (4Z,7Z,10Z,13Z,16Z,19Z)-docosahexaenoate + O2 = (14S)-hydroperoxy-(4Z,7Z,10Z,12E,16Z,19Z)-docosahexaenoate. Its pathway is lipid metabolism; hydroperoxy eicosatetraenoic acid biosynthesis. Its activity is regulated as follows. Arachidonate 12-lipoxygenase activity is decreased when the pH decreases from 7.4 to 6.0. In terms of biological role, catalyzes the regio and stereo-specific incorporation of a single molecule of dioxygen into free and esterified polyunsaturated fatty acids generating lipid hydroperoxides that can be further reduced to the corresponding hydroxy species. Shows increasing catalytic activity within the series arachidonic acid &lt; 5,8,11-eicosatrienoic acid &lt; linoleic acid &lt; 8,11,14-eicosatrienoic acid. This chain is Polyunsaturated fatty acid (12S)/(13S)-lipoxygenase, epidermal-type, found in Rattus norvegicus (Rat).